A 186-amino-acid polypeptide reads, in one-letter code: FMN-dependent NADH:quinone oxidoreductase 1 (186 aa).

FMN contacts are provided by residues 15 to 17 (SVS) and 81 to 84 (MYNF).

It belongs to the azoreductase type 1 family. In terms of assembly, homodimer. Requires FMN as cofactor.

It catalyses the reaction 2 a quinone + NADH + H(+) = 2 a 1,4-benzosemiquinone + NAD(+). It carries out the reaction N,N-dimethyl-1,4-phenylenediamine + anthranilate + 2 NAD(+) = 2-(4-dimethylaminophenyl)diazenylbenzoate + 2 NADH + 2 H(+). Its function is as follows. Quinone reductase that provides resistance to thiol-specific stress caused by electrophilic quinones. In terms of biological role, also exhibits azoreductase activity. Catalyzes the reductive cleavage of the azo bond in aromatic azo compounds to the corresponding amines. This is FMN-dependent NADH:quinone oxidoreductase 1 from Idiomarina loihiensis (strain ATCC BAA-735 / DSM 15497 / L2-TR).